The primary structure comprises 445 residues: 23S rRNA (uracil(1939)-C(5))-methyltransferase RlmD (445 aa).

A TRAM domain is found at Arg-6–Glu-64. [4Fe-4S] cluster contacts are provided by Cys-77, Cys-83, Cys-86, and Cys-165. S-adenosyl-L-methionine is bound by residues Gln-274, Phe-303, Asn-308, Glu-324, Asp-351, and Asp-372. Cys-398 acts as the Nucleophile in catalysis.

This sequence belongs to the class I-like SAM-binding methyltransferase superfamily. RNA M5U methyltransferase family. RlmD subfamily.

The catalysed reaction is uridine(1939) in 23S rRNA + S-adenosyl-L-methionine = 5-methyluridine(1939) in 23S rRNA + S-adenosyl-L-homocysteine + H(+). Its function is as follows. Catalyzes the formation of 5-methyl-uridine at position 1939 (m5U1939) in 23S rRNA. The sequence is that of 23S rRNA (uracil(1939)-C(5))-methyltransferase RlmD from Alkalilimnicola ehrlichii (strain ATCC BAA-1101 / DSM 17681 / MLHE-1).